An 820-amino-acid polypeptide reads, in one-letter code: Serine/threonine-protein phosphatase 4 regulatory subunit 3-A (820 aa).

The WH1 domain occupies 1 to 100; the sequence is MSDTRRRVKV…DEIWEKICQV (100 aa). A compositionally biased stretch (acidic residues) spans 682-694; the sequence is ELWFNEDDEEEGE. Disordered stretches follow at residues 682–712 and 750–820; these read ELWF…FPEG and AANG…RLGS. A compositionally biased stretch (basic and acidic residues) spans 701 to 712; sequence EKTKPEDDFPEG. Polar residues-rich tracts occupy residues 750–761 and 768–790; these read AANGANSTNSKS and PATS…STKG. The segment covering 798 to 809 has biased composition (acidic residues); it reads YPDDEDEEEEED.

It belongs to the SMEK family. As to quaternary structure, serine/threonine-protein phosphatase 4 (PP4) occurs in different assemblies of the catalytic and one or more regulatory subunits.

Functionally, regulatory subunit of serine/threonine-protein phosphatase 4 (PP4). The chain is Serine/threonine-protein phosphatase 4 regulatory subunit 3-A from Xenopus laevis (African clawed frog).